The following is a 519-amino-acid chain: Aldehyde dehydrogenase X, mitochondrial (519 aa).

The transit peptide at 1-19 directs the protein to the mitochondrion; it reads MLNARFLVPRLLCLQGRTT. N6-acetyllysine is present on Lys53. N6-acetyllysine; alternate is present on Lys54. Lys54 bears the N6-succinyllysine; alternate mark. 264–269 lines the NAD(+) pocket; sequence GSTEVG. Glu287 (proton acceptor) is an active-site residue. Cys321 (nucleophile) is an active-site residue. N6-acetyllysine; alternate is present on residues Lys366, Lys385, Lys401, and Lys428. Lys366, Lys385, Lys401, and Lys428 each carry N6-succinyllysine; alternate. N6-acetyllysine is present on Lys431.

This sequence belongs to the aldehyde dehydrogenase family. Homotetramer.

It is found in the mitochondrion matrix. The catalysed reaction is an aldehyde + NAD(+) + H2O = a carboxylate + NADH + 2 H(+). Its pathway is alcohol metabolism; ethanol degradation; acetate from ethanol: step 2/2. ALDHs play a major role in the detoxification of alcohol-derived acetaldehyde. They are involved in the metabolism of corticosteroids, biogenic amines, neurotransmitters, and lipid peroxidation. The polypeptide is Aldehyde dehydrogenase X, mitochondrial (Aldh1b1) (Rattus norvegicus (Rat)).